The following is a 245-amino-acid chain: tRNA pseudouridine synthase A 2 (245 aa).

The active-site Nucleophile is the Asp-53. Residue Tyr-111 coordinates substrate.

Belongs to the tRNA pseudouridine synthase TruA family. As to quaternary structure, homodimer.

It catalyses the reaction uridine(38/39/40) in tRNA = pseudouridine(38/39/40) in tRNA. Its function is as follows. Formation of pseudouridine at positions 38, 39 and 40 in the anticodon stem and loop of transfer RNAs. The chain is tRNA pseudouridine synthase A 2 from Bacillus thuringiensis subsp. konkukian (strain 97-27).